A 64-amino-acid polypeptide reads, in one-letter code: MVAPTLTARLYSLLFRRTSTFALTIVVGALFFERAFDQGADAIYEHINEGKLWKHIKHKYENKE.

Topologically, residues 2-21 (VAPTLTARLYSLLFRRTSTF) are mitochondrial matrix. Residues 22-47 (ALTIVVGALFFERAFDQGADAIYEHI) form a helical membrane-spanning segment. Residues 48–64 (NEGKLWKHIKHKYENKE) are Mitochondrial intermembrane-facing.

It belongs to the UQCR10/QCR9 family. In terms of assembly, component of the ubiquinol-cytochrome c oxidoreductase (cytochrome b-c1 complex, complex III, CIII), a multisubunit enzyme composed of 11 subunits. The complex is composed of 3 respiratory subunits cytochrome b, cytochrome c1 and Rieske protein UQCRFS1, 2 core protein subunits UQCRC1/QCR1 and UQCRC2/QCR2, and 6 low-molecular weight protein subunits UQCRH/QCR6, UQCRB/QCR7, UQCRQ/QCR8, UQCR10/QCR9, UQCR11/QCR10 and subunit 9, the cleavage product of Rieske protein UQCRFS1. The complex exists as an obligatory dimer and forms supercomplexes (SCs) in the inner mitochondrial membrane with NADH-ubiquinone oxidoreductase (complex I, CI) and cytochrome c oxidase (complex IV, CIV), resulting in different assemblies (supercomplex SCI(1)III(2)IV(1) and megacomplex MCI(2)III(2)IV(2)). Interacts with STMP1.

Its subcellular location is the mitochondrion inner membrane. Its function is as follows. Component of the ubiquinol-cytochrome c oxidoreductase, a multisubunit transmembrane complex that is part of the mitochondrial electron transport chain which drives oxidative phosphorylation. The respiratory chain contains 3 multisubunit complexes succinate dehydrogenase (complex II, CII), ubiquinol-cytochrome c oxidoreductase (cytochrome b-c1 complex, complex III, CIII) and cytochrome c oxidase (complex IV, CIV), that cooperate to transfer electrons derived from NADH and succinate to molecular oxygen, creating an electrochemical gradient over the inner membrane that drives transmembrane transport and the ATP synthase. The cytochrome b-c1 complex catalyzes electron transfer from ubiquinol to cytochrome c, linking this redox reaction to translocation of protons across the mitochondrial inner membrane, with protons being carried across the membrane as hydrogens on the quinol. In the process called Q cycle, 2 protons are consumed from the matrix, 4 protons are released into the intermembrane space and 2 electrons are passed to cytochrome c. In Bos taurus (Bovine), this protein is Cytochrome b-c1 complex subunit 9 (UQCR10).